Reading from the N-terminus, the 61-residue chain is Alpha-conotoxin CnIJ (61 aa).

An N-terminal signal peptide occupies residues 1-17 (MMFTVFLLVVLTTTVVS). Residues 18–44 (FPSDSASDGRDDEAKDERSDMYELKRN) constitute a propeptide that is removed on maturation. 2 cysteine pairs are disulfide-bonded: C47-C52 and C48-C59. C59 is subject to Cysteine amide.

It belongs to the conotoxin A superfamily. As to expression, expressed by the venom duct.

It localises to the secreted. This is Alpha-conotoxin CnIJ from Conus consors (Singed cone).